Consider the following 154-residue polypeptide: 6,7-dimethyl-8-ribityllumazine synthase (154 aa).

Residues 22–23 (FN), 56–58 (SWE), and 80–82 (VLI) each bind 5-amino-6-(D-ribitylamino)uracil. 85-86 (AT) lines the (2S)-2-hydroxy-3-oxobutyl phosphate pocket. The Proton donor role is filled by H88. Position 113 (F113) interacts with 5-amino-6-(D-ribitylamino)uracil. R127 contacts (2S)-2-hydroxy-3-oxobutyl phosphate. 5-amino-6-(D-ribitylamino)uracil is bound at residue K135.

The protein belongs to the DMRL synthase family. In terms of assembly, forms an icosahedral capsid composed of 60 subunits, arranged as a dodecamer of pentamers.

The catalysed reaction is (2S)-2-hydroxy-3-oxobutyl phosphate + 5-amino-6-(D-ribitylamino)uracil = 6,7-dimethyl-8-(1-D-ribityl)lumazine + phosphate + 2 H2O + H(+). It functions in the pathway cofactor biosynthesis; riboflavin biosynthesis; riboflavin from 2-hydroxy-3-oxobutyl phosphate and 5-amino-6-(D-ribitylamino)uracil: step 1/2. Its function is as follows. Catalyzes the formation of 6,7-dimethyl-8-ribityllumazine by condensation of 5-amino-6-(D-ribitylamino)uracil with 3,4-dihydroxy-2-butanone 4-phosphate. This is the penultimate step in the biosynthesis of riboflavin. The protein is 6,7-dimethyl-8-ribityllumazine synthase (ribH) of Aquifex aeolicus (strain VF5).